The sequence spans 318 residues: Olfactory receptor 2T34 (318 aa).

Residues 1–30 are Extracellular-facing; the sequence is MCSGNQTSQNQTASTDFTLTGLFAESKHAA. N-linked (GlcNAc...) asparagine glycosylation is found at N5 and N10. The chain crosses the membrane as a helical span at residues 31 to 54; that stretch reads LLYTVTFLLFLMALTGNALLILLI. The Cytoplasmic portion of the chain corresponds to 55 to 62; sequence HSEPRLHT. A helical membrane pass occupies residues 63–84; that stretch reads PMYFFISQLALMDLMYLCVTVP. Residues 85–105 are Extracellular-facing; sequence KMLVGQVTGDDTISPSGCGIQ. C102 and C194 are disulfide-bonded. A helical membrane pass occupies residues 106-125; that stretch reads MFFHLTLAGAEVFLLAAMAY. Topologically, residues 126–144 are cytoplasmic; sequence DRYAAVCRPLHYPLLMNQR. Residues 145-163 traverse the membrane as a helical segment; that stretch reads VCQLLVSACWVLGMVDGLL. The Extracellular portion of the chain corresponds to 164 to 200; the sequence is LTPITMSFPFCQSRKILSFFCETPALLKLSCSDVSLY. The chain crosses the membrane as a helical span at residues 201-224; that stretch reads KMLTYLCCILMLLTPIMVISSSYT. The Cytoplasmic portion of the chain corresponds to 225-241; it reads LILHLIHRMNSAAGRRK. The helical transmembrane segment at 242–264 threads the bilayer; that stretch reads ALATCSSHMIIVLLLFGASFYTY. Residues 265 to 277 lie on the Extracellular side of the membrane; it reads MLRSSYHTAEQDM. The chain crosses the membrane as a helical span at residues 278 to 297; that stretch reads MVSAFYTIFTPVLNPLIYSL. Topologically, residues 298–318 are cytoplasmic; that stretch reads RNKDVTRALRSMMQSRMNQEK.

The protein belongs to the G-protein coupled receptor 1 family.

It localises to the cell membrane. Odorant receptor. The polypeptide is Olfactory receptor 2T34 (OR2T34) (Homo sapiens (Human)).